Consider the following 648-residue polypeptide: RAF proto-oncogene serine/threonine-protein kinase (648 aa).

A Phosphoserine; by MAPK1 modification is found at S29. S43 is subject to Phosphoserine. Residues 56 to 131 (NTIRVFLPNK…IGEELQVDFL (76 aa)) enclose the RBD domain. The Phorbol-ester/DAG-type zinc finger occupies 138-184 (THNFARKTFLKLAFCDICQKFLLNGFRCQTCGYKFHEHCSTKVPTMC). The Zn(2+) site is built by H139, C152, C155, C165, C168, H173, C176, and C184. The segment at 217–335 (MRESVSRMPA…EKNKIRPRGQ (119 aa)) is disordered. At S233 the chain carries Phosphoserine; by PKA. A compositionally biased stretch (polar residues) spans 239–271 (TFNTSSPSSEGSLSQRQRSTSTPNVHMVSTTLP). Phosphoserine is present on residues S252 and S259. A Phosphothreonine; by autocatalysis modification is found at T268. T269 is subject to Phosphothreonine; by PKA. A compositionally biased stretch (basic and acidic residues) spans 275–285 (RMIEDAIRSHS). Low complexity predominate over residues 286-301 (ESASPSALSSSPNNLS). Phosphoserine; by MAPK1 occurs at positions 289, 296, and 301. An interaction with PEBP1/RKIP region spans residues 331–349 (RPRGQRDSSYYWEIEASEV). S338 carries the post-translational modification Phosphoserine; by PAK1, PAK2, PAK3 and PAK5. S339 carries the phosphoserine; by PAK1, PAK2 and PAK3 modification. A phosphotyrosine; by SRC mark is found at Y340 and Y341. In terms of domain architecture, Protein kinase spans 349–609 (VMLSTRIGSG…PQILSSIELL (261 aa)). Residues 355-363 (IGSGSFGTV) and K375 contribute to the ATP site. D468 acts as the Proton acceptor in catalysis. S471 carries the phosphoserine modification. Residue T491 is modified to Phosphothreonine. S494 carries the post-translational modification Phosphoserine. 2 positions are modified to phosphoserine; by PKC: S497 and S499. At R563 the chain carries Symmetric dimethylarginine; by PRMT5. At S621 the chain carries Phosphoserine. S642 is modified (phosphoserine; by MAPK1).

It belongs to the protein kinase superfamily. TKL Ser/Thr protein kinase family. RAF subfamily. As to quaternary structure, monomer. Homodimer. Heterodimerizes with BRAF and this heterodimer possesses a highly increased kinase activity compared to the respective homodimers or monomers. Heterodimerization is mitogen-regulated and enhanced by 14-3-3 proteins. MAPK1/ERK2 activation can induce a negative feedback that promotes the dissociation of the heterodimer. Forms a multiprotein complex with Ras (M-Ras/MRAS), SHOC2 and protein phosphatase 1 (PPP1CA, PPP1CB and PPP1CC). Interacts with LZTR1. Interacts with Ras proteins; the interaction is antagonized by RIN1. Weakly interacts with RIT1. Interacts with STK3/MST2; the interaction inhibits its pro-apoptotic activity. Interacts (when phosphorylated at Ser-259) with YWHAZ (unphosphorylated at 'Thr-232'). Interacts with MAP3K5/ASF1 (via N-terminus) and this interaction inhibits the proapoptotic function of MAP3K5/ASK1. Interacts with PAK1 (via kinase domain). The phosphorylated form interacts with PIN1. The Ser-338 and Ser-339 phosphorylated form (by PAK1) interacts with BCL2. Interacts with PEBP1/RKIP and this interaction is enhanced if RAF1 is phosphorylated on residues Ser-338, Ser-339, Tyr-340 and Tyr-341. Interacts with ADCY2, ADCY5, ADCY6, DGKH, RCAN1/DSCR1, PPP1R12A, PKB/AKT1, PPP2CA, PPP2R1B, SPRY2, SPRY4, CNKSR1/CNK1, KSR2 and PHB/prohibitin. Interacts with ROCK2. Interacts (via N-terminus) with RGS14 (via RBD domains); the interaction mediates the formation of a ternary complex with BRAF, a ternary complex inhibited by GNAI1. Probably forms a complex composed of chaperones HSP90 and HSP70, co-chaperones CDC37, PPP5C, TSC1 and client protein TSC2, CDK4, AKT, RAF1 and NR3C1; this complex does not contain co-chaperones STIP1/HOP and PTGES3/p23. Interacts with MAP2K1/MEK1 and MAP2K2/MEK2. In its active form, interacts with PRMT5. Interacts with FAM83B; displaces 14-3-3 proteins from RAF1 and activates RAF1. Interacts with PDE8A; the interaction promotes RAF1 activity. Interacts with MFHAS1. Interacts with GLS. Interacts with YWHAZ. Interacts with NEK10 and MAP2K1; the interaction is direct with NEK10 and required for ERK1/2-signaling pathway activation in response to UV irradiation. Zn(2+) is required as a cofactor. In terms of processing, phosphorylation at Thr-269, Ser-338, Tyr-341, Thr-491 and Ser-494 results in its activation. Phosphorylation at Ser-29, Ser-43, Ser-289, Ser-296, Ser-301 and Ser-642 by MAPK1/ERK2 results in its inactivation. Phosphorylation at Ser-259 induces the interaction with YWHAZ and inactivates kinase activity. Dephosphorylation of Ser-259 by the SHOC2-MRAS-PP1c (SMP) complex consisting of SHOC2, GTP-bound M-Ras/MRAS and the catalytic subunit of protein phosphatase 1 (PPP1CA, PPP1CB or PPP1CC); this relieves inactivation and stimulates kinase activity. Phosphorylation at Ser-338 by PAK1 and PAK5 and Ser-339 by PAK1 is required for its mitochondrial localization. Phosphorylation at Ser-621 in response to growth factor treatment stabilizes the protein, possibly by preventing proteasomal degradation. Phosphorylation at Ser-289, Ser-296, Ser-301, Ser-338 and Ser-621 are somehow linked to the methylation potential of cells. Treatment of cells with HGF in the presence of the methylation inhibitor 5'-methylthioadenosine (MTA) results in increased phosphorylation at Ser-338 and Ser-621 and decreased phosphorylation at Ser-296, Ser-301 and Ser-338. Dephosphorylation at Ser-338 by PPP5C results in a decreased of activity. Methylated in response to EGF treatment. This modification leads to destabilization of the protein, possibly through proteasomal degradation.

Its subcellular location is the cytoplasm. The protein localises to the cell membrane. It is found in the mitochondrion. It localises to the nucleus. The catalysed reaction is L-seryl-[protein] + ATP = O-phospho-L-seryl-[protein] + ADP + H(+). It catalyses the reaction L-threonyl-[protein] + ATP = O-phospho-L-threonyl-[protein] + ADP + H(+). With respect to regulation, regulation is a highly complex process involving membrane recruitment, protein-protein interactions, dimerization, and phosphorylation/dephosphorylation events. Ras-GTP recruits RAF1 to the membrane, thereby promoting its activation. The inactive conformation of RAF1 is maintained by autoinhibitory interactions occurring between the N-terminal regulatory and the C-terminal catalytic domains and by the binding of a 14-3-3 protein that contacts two phosphorylation sites, Ser-259 and Ser-621. Upon mitogenic stimulation, Ras and PPP2R1A cooperate to release autoinhibition and the subsequent phosphorylation of activating sites: Ser-338, Tyr-341, Thr-491, and Ser-494, yields a fully active kinase. Through a negative feedback mechanism involving MAPK1/ERK2, RAF1 is phosphorylated on Ser-29, Ser-43, Ser-289, Ser-296, Ser-301 and Ser-642 by MAPK1/ERK2, which yields an inactive, desensitized kinase. The signaling-competent conformation of RAF1 is finally re-established by the coordinated action of PIN1, a prolyl isomerase that converts pSer and pThr residues from the cis to the trans conformation, which is preferentially recognized and dephosphorylated by PPP2R1A. Activated by homodimerization and heterodimerization (with BRAF). Also regulated through association with other proteins such as KSR2, CNKSR1/CNK1, PEBP1/RKIP, PHB/prohibitin and SPRY4. PEBP1/RKIP acts by dissociating RAF1 from its substrates MAP2K1/MEK1 and MAP2K2/MEK2. PHB/prohibitin facilitates the displacement of 14-3-3 from RAF1 by activated Ras, thereby promoting cell membrane localization and phosphorylation of RAF1 at the activating Ser-338. SPRY4 inhibits Ras-independent, but not Ras-dependent, activation of RAF1. CNKSR1/CNK1 regulates Src-mediated RAF1 activation. In terms of biological role, serine/threonine-protein kinase that acts as a regulatory link between the membrane-associated Ras GTPases and the MAPK/ERK cascade, and this critical regulatory link functions as a switch determining cell fate decisions including proliferation, differentiation, apoptosis, survival and oncogenic transformation. RAF1 activation initiates a mitogen-activated protein kinase (MAPK) cascade that comprises a sequential phosphorylation of the dual-specific MAPK kinases (MAP2K1/MEK1 and MAP2K2/MEK2) and the extracellular signal-regulated kinases (MAPK3/ERK1 and MAPK1/ERK2). The phosphorylated form of RAF1 (on residues Ser-338 and Ser-339, by PAK1) phosphorylates BAD/Bcl2-antagonist of cell death at 'Ser-75'. Phosphorylates adenylyl cyclases: ADCY2, ADCY5 and ADCY6, resulting in their activation. Phosphorylates PPP1R12A resulting in inhibition of the phosphatase activity. Can promote NF-kB activation and inhibit signal transducers involved in motility (ROCK2), apoptosis (MAP3K5/ASK1 and STK3/MST2), proliferation and angiogenesis (RB1). Can protect cells from apoptosis also by translocating to the mitochondria where it binds BCL2 and displaces BAD/Bcl2-antagonist of cell death. Regulates Rho signaling and migration, and is required for normal wound healing. Plays a role in the oncogenic transformation of epithelial cells via repression of the TJ protein, occludin (OCLN) by inducing the up-regulation of a transcriptional repressor SNAI2/SLUG, which induces down-regulation of OCLN. Restricts caspase activation in response to selected stimuli, notably Fas stimulation, pathogen-mediated macrophage apoptosis, and erythroid differentiation. Phosphorylates TNNT2/cardiac muscle troponin T. This chain is RAF proto-oncogene serine/threonine-protein kinase (Raf1), found in Rattus norvegicus (Rat).